The following is a 202-amino-acid chain: Transmembrane 4 L6 family member 4 (202 aa).

The Cytoplasmic segment spans residues 1-9; sequence MCTGGCARC. A helical membrane pass occupies residues 10–30; that stretch reads LGGTLIPLAFFGFLANILLFF. The Extracellular segment spans residues 31-45; it reads PGGKVIDDNDHLSQE. Residues 46-66 form a helical membrane-spanning segment; it reads IWFFGGILGSGVLMIFPALVF. The Cytoplasmic portion of the chain corresponds to 67-93; the sequence is LGLKNNDCCGCCGNEGCGKRFAMFTST. The helical transmembrane segment at 94–114 threads the bilayer; the sequence is IFAVVGFLGAGYSFIISAISI. The Extracellular segment spans residues 115-158; the sequence is NKGPKCLMANSTWGYPFHDGDYLNDEALWNKCREPLNVVPWNLT. N124 and N156 each carry an N-linked (GlcNAc...) asparagine glycan. The helical transmembrane segment at 159–179 threads the bilayer; that stretch reads LFSILLVVGGIQMVLCAIQVV. Residues 180-202 lie on the Cytoplasmic side of the membrane; that stretch reads NGLLGTLCGDCQCCGCCGGDGPV.

This sequence belongs to the L6 tetraspanin family. Post-translationally, N-glycosylated. Glycosylation is required for the growth inhibitory effect. As to expression, jejunum and liver.

The protein resides in the membrane. Regulates the adhesive and proliferative status of intestinal epithelial cells. Can mediate density-dependent cell proliferation. This Homo sapiens (Human) protein is Transmembrane 4 L6 family member 4 (TM4SF4).